A 145-amino-acid polypeptide reads, in one-letter code: Large ribosomal subunit protein uL13 (145 aa).

Belongs to the universal ribosomal protein uL13 family. Part of the 50S ribosomal subunit.

Its function is as follows. This protein is one of the early assembly proteins of the 50S ribosomal subunit, although it is not seen to bind rRNA by itself. It is important during the early stages of 50S assembly. The chain is Large ribosomal subunit protein uL13 from Bacillus mycoides (strain KBAB4) (Bacillus weihenstephanensis).